The following is a 580-amino-acid chain: Alpha-thujene synthase TPS3, chloroplastic (580 aa).

A chloroplast-targeting transit peptide spans 1-26; the sequence is MALQLLTPSFSFQHSPSPHRLTTLRY. R296, D333, D337, R473, and D476 together coordinate (2E)-geranyl diphosphate. Positions 333 and 337 each coordinate Mg(2+). The DDXXD motif signature appears at 333–337; the sequence is DDVYD. 3 residues coordinate Mg(2+): D476, T480, and E484.

It belongs to the terpene synthase family. Tpsb subfamily. As to quaternary structure, monomer. Mg(2+) serves as cofactor. Requires Mn(2+) as cofactor. Mostly expressed in developing and mature fruits, and, to a lower extent, in male leaves. Barely detectable in female leaves and shoots.

The protein localises to the plastid. It localises to the chloroplast. It carries out the reaction (2E)-geranyl diphosphate = alpha-thujene + diphosphate. The enzyme catalyses (2E)-geranyl diphosphate = (1R,5R)-sabinene + diphosphate. The protein operates within secondary metabolite biosynthesis; terpenoid biosynthesis. Monoterpene synthase (TPS) involved in the biosynthesis of monoterpene natural products used by traditional Chinese medicine to treat headache, inflammation and intoxication. Catalyzes the conversion of (2E)-geranyl diphosphate (GPP) into alpha-thujene and (1R,5R)-sabinene. The protein is Alpha-thujene synthase TPS3, chloroplastic of Litsea cubeba (Aromatic litsea).